The chain runs to 336 residues: 3-isopropylmalate dehydrogenase (336 aa).

Residues Arg-87, Arg-97, Arg-121, and Asp-211 each coordinate substrate. Residues Asp-211, Asp-235, and Asp-239 each coordinate Mg(2+). 271–283 lines the NAD(+) pocket; that stretch reads GSAPDIAGQGIAD.

This sequence belongs to the isocitrate and isopropylmalate dehydrogenases family. LeuB type 2 subfamily. In terms of assembly, homodimer. The cofactor is Mg(2+). Requires Mn(2+) as cofactor.

It localises to the cytoplasm. It catalyses the reaction (2R,3S)-3-isopropylmalate + NAD(+) = 4-methyl-2-oxopentanoate + CO2 + NADH. It functions in the pathway amino-acid biosynthesis; L-leucine biosynthesis; L-leucine from 3-methyl-2-oxobutanoate: step 3/4. Its function is as follows. Catalyzes the oxidation of 3-carboxy-2-hydroxy-4-methylpentanoate (3-isopropylmalate) to 3-carboxy-4-methyl-2-oxopentanoate. The product decarboxylates to 4-methyl-2 oxopentanoate. In Mycobacterium sp. (strain JLS), this protein is 3-isopropylmalate dehydrogenase.